The chain runs to 86 residues: Small ribosomal subunit protein uS17 (86 aa).

The protein belongs to the universal ribosomal protein uS17 family. In terms of assembly, part of the 30S ribosomal subunit.

Functionally, one of the primary rRNA binding proteins, it binds specifically to the 5'-end of 16S ribosomal RNA. The chain is Small ribosomal subunit protein uS17 from Rhizorhabdus wittichii (strain DSM 6014 / CCUG 31198 / JCM 15750 / NBRC 105917 / EY 4224 / RW1) (Sphingomonas wittichii).